The following is a 57-amino-acid chain: Ribulose bisphosphate carboxylase large chain (57 aa).

Positions 1 to 2 (MS) are excised as a propeptide. Pro3 is modified (N-acetylproline). Lys14 bears the N6,N6,N6-trimethyllysine mark.

This sequence belongs to the RuBisCO large chain family. Type I subfamily. In terms of assembly, heterohexadecamer of 8 large chains and 8 small chains.

The protein localises to the plastid. It is found in the chloroplast. The catalysed reaction is 2 (2R)-3-phosphoglycerate + 2 H(+) = D-ribulose 1,5-bisphosphate + CO2 + H2O. The enzyme catalyses D-ribulose 1,5-bisphosphate + O2 = 2-phosphoglycolate + (2R)-3-phosphoglycerate + 2 H(+). Functionally, ruBisCO catalyzes two reactions: the carboxylation of D-ribulose 1,5-bisphosphate, the primary event in carbon dioxide fixation, as well as the oxidative fragmentation of the pentose substrate in the photorespiration process. Both reactions occur simultaneously and in competition at the same active site. In Camellia sinensis (Tea plant), this protein is Ribulose bisphosphate carboxylase large chain (rbcL).